A 471-amino-acid chain; its full sequence is MSLSRRSFLQASGVALAAGALPLKAEASGSQPALPVPPLLESRRGQPLFLTLQAAHWSFLGGAKAPVWGINGMYLGPTVKVHSGDDVKLIYSNRLAEPVSMTVSGLLEPGTLTGGAARLMQPGVDWSPVLPIRQAAATCWYHANTPNRMAPHVYNGLAGMWIVEDEVSKNLPLPNHYGVDDFPIIIQDKRLDGFGVPQYDTPASGGFFGDTMLVNGVQSPYVEVSRGWVRLRLLNASNARRYELSMTDNRAFHVVASDLGFLPAPMTVKRLSLGPGERREVLVDMSQGEEVSITAGEAAGVMDRLRGLFEPSSILVSTIVLTLKPTGLLPLVTDNLPMRLLADQILSGNVVRTRDLRLGDSEPGINGAMWDINRIDLTAQQGTWERWTVHADMPQTFHAEGVSFLVKSVNGAAPLVEDAGFKDTVWVDGDVELLVYFNQPSYEHFPFVYRSGALELADRGSAGNMLVQPSM.

A signal peptide (tat-type signal) is located at residues 1-27 (MSLSRRSFLQASGVALAAGALPLKAEA). Positions 229–288 (VRLRLLNASNARRYELSMTDNRAFHVVASDLGFLPAPMTVKRLSLGPGERREVLVDMSQG) constitute a Plastocyanin-like domain.

It belongs to the FtsP family. Post-translationally, predicted to be exported by the Tat system. The position of the signal peptide cleavage has not been experimentally proven.

It localises to the periplasm. Cell division protein that is required for growth during stress conditions. May be involved in protecting or stabilizing the divisomal assembly under conditions of stress. In Rahnella sp. (strain Y9602), this protein is Cell division protein FtsP.